Reading from the N-terminus, the 382-residue chain is Na(+)/H(+) antiporter NhaA 2 (382 aa).

11 consecutive transmembrane segments (helical) span residues 7 to 27, 58 to 78, 94 to 114, 124 to 144, 153 to 173, 178 to 198, 199 to 219, 255 to 275, 291 to 311, 327 to 347, and 361 to 381; these read MALS…LALL, LDLW…GLEL, SLPI…FAAI, GWAI…MLLG, LFLL…IALF, LSAL…LLNY, YHIT…IAML, NPWV…GIDI, IILG…FIAI, FYGI…IDGL, and LAIL…LKIV.

The protein belongs to the NhaA Na(+)/H(+) (TC 2.A.33) antiporter family.

It is found in the cell inner membrane. It carries out the reaction Na(+)(in) + 2 H(+)(out) = Na(+)(out) + 2 H(+)(in). In terms of biological role, na(+)/H(+) antiporter that extrudes sodium in exchange for external protons. This Campylobacter jejuni subsp. doylei (strain ATCC BAA-1458 / RM4099 / 269.97) protein is Na(+)/H(+) antiporter NhaA 2.